The following is a 399-amino-acid chain: Phosphoglycerate kinase (399 aa).

Substrate is bound by residues 22–24 (DLN), Arg-37, 60–63 (HFGR), Arg-119, and Arg-152. ATP contacts are provided by residues Lys-202, Glu-324, and 354–357 (GGDT).

This sequence belongs to the phosphoglycerate kinase family. Monomer.

The protein resides in the cytoplasm. The enzyme catalyses (2R)-3-phosphoglycerate + ATP = (2R)-3-phospho-glyceroyl phosphate + ADP. It participates in carbohydrate degradation; glycolysis; pyruvate from D-glyceraldehyde 3-phosphate: step 2/5. In Sinorhizobium fredii (strain NBRC 101917 / NGR234), this protein is Phosphoglycerate kinase.